The chain runs to 650 residues: Chaperone protein DnaK (650 aa).

Thr-200 is modified (phosphothreonine; by autocatalysis). Residues 613–634 (QAGAAGAAGAAEGAAHAGGAQQ) form a disordered region.

It belongs to the heat shock protein 70 family.

Functionally, acts as a chaperone. This chain is Chaperone protein DnaK, found in Burkholderia vietnamiensis (strain G4 / LMG 22486) (Burkholderia cepacia (strain R1808)).